A 412-amino-acid chain; its full sequence is Gamma-glutamyl phosphate reductase (412 aa).

It belongs to the gamma-glutamyl phosphate reductase family.

The protein resides in the cytoplasm. It catalyses the reaction L-glutamate 5-semialdehyde + phosphate + NADP(+) = L-glutamyl 5-phosphate + NADPH + H(+). The protein operates within amino-acid biosynthesis; L-proline biosynthesis; L-glutamate 5-semialdehyde from L-glutamate: step 2/2. Its function is as follows. Catalyzes the NADPH-dependent reduction of L-glutamate 5-phosphate into L-glutamate 5-semialdehyde and phosphate. The product spontaneously undergoes cyclization to form 1-pyrroline-5-carboxylate. In Bartonella bacilliformis (strain ATCC 35685 / KC583 / Herrer 020/F12,63), this protein is Gamma-glutamyl phosphate reductase.